The chain runs to 546 residues: Plastidic glucose transporter 4 (546 aa).

A run of 12 helical transmembrane segments spans residues 105-125 (VLPFVGVACLGAILFGYHLGV), 148-168 (WIVSSLLAGATVGSFTGGALA), 182-202 (IPLAIGAFLCATAQSVQTMIV), 205-225 (LLAGIGIGISSAIVPLYISEI), 240-260 (LFICIGILAALIAGLPLAANP), 265-285 (TMFGVAVIPSVLLAIGMAFSP), 345-365 (VVSVGAALFLFQQLAGINAVV), 381-401 (VAASALVGASNVFGTAVASSL), 410-430 (LLLTSFGGMALSMLLLSLSFT), 441-461 (LAVVGTVLYVLSFSLGAGPVP), 477-497 (AVALSLGMHWISNFVIGLYFL), and 503-523 (FGISSVYLGFAGVCVLAVLYI).

It belongs to the major facilitator superfamily. Sugar transporter (TC 2.A.1.1) family.

Its subcellular location is the plastid. The protein resides in the chloroplast inner membrane. May be involved in the efflux of glucose towards the cytosol. The sequence is that of Plastidic glucose transporter 4 from Arabidopsis thaliana (Mouse-ear cress).